We begin with the raw amino-acid sequence, 230 residues long: Cytidylate kinase (230 aa).

An ATP-binding site is contributed by 12–20 (GPSGAGKGT).

It belongs to the cytidylate kinase family. Type 1 subfamily.

The protein resides in the cytoplasm. It carries out the reaction CMP + ATP = CDP + ADP. The catalysed reaction is dCMP + ATP = dCDP + ADP. This Shewanella pealeana (strain ATCC 700345 / ANG-SQ1) protein is Cytidylate kinase.